Reading from the N-terminus, the 159-residue chain is MPLPRQPLSLKARALGYLSRREHSRVELRRKLVPHAESAEEVDALLDWLEGENWLSNTRFAESMVHRRAGRYGTARLMQELKTHQLGEETLGEVKAQLQSTEAVRAKALWEKRFGRPPADLAERAKQVRYMMARGFSRSVVSRIIAGADELLEDGDMSD.

It belongs to the RecX family.

The protein localises to the cytoplasm. Functionally, modulates RecA activity. The chain is Regulatory protein RecX from Ralstonia pickettii (strain 12J).